The sequence spans 344 residues: Methionine import ATP-binding protein MetN 1 (344 aa).

The ABC transporter domain occupies 2 to 241; it reads IELRNLSQRF…PHHEVTRALI (240 aa). 38–45 provides a ligand contact to ATP; that stretch reads GRSGAGKS.

It belongs to the ABC transporter superfamily. Methionine importer (TC 3.A.1.24) family. As to quaternary structure, the complex is composed of two ATP-binding proteins (MetN), two transmembrane proteins (MetI) and a solute-binding protein (MetQ).

It is found in the cell inner membrane. The enzyme catalyses L-methionine(out) + ATP + H2O = L-methionine(in) + ADP + phosphate + H(+). The catalysed reaction is D-methionine(out) + ATP + H2O = D-methionine(in) + ADP + phosphate + H(+). Functionally, part of the ABC transporter complex MetNIQ involved in methionine import. Responsible for energy coupling to the transport system. The sequence is that of Methionine import ATP-binding protein MetN 1 from Burkholderia orbicola (strain AU 1054).